The chain runs to 361 residues: Queuine tRNA-ribosyltransferase (361 aa).

D92 functions as the Proton acceptor in the catalytic mechanism. Substrate contacts are provided by residues 92–96 (DSGGF), D146, Q189, and G216. The interval 247-253 (GVGKPAD) is RNA binding. The active-site Nucleophile is D266. The interval 271 to 275 (TRSGR) is RNA binding; important for wobble base 34 recognition. Zn(2+)-binding residues include C304, C306, C309, and H335.

The protein belongs to the queuine tRNA-ribosyltransferase family. As to quaternary structure, homodimer. Within each dimer, one monomer is responsible for RNA recognition and catalysis, while the other monomer binds to the replacement base PreQ1. The cofactor is Zn(2+).

It catalyses the reaction 7-aminomethyl-7-carbaguanine + guanosine(34) in tRNA = 7-aminomethyl-7-carbaguanosine(34) in tRNA + guanine. Its pathway is tRNA modification; tRNA-queuosine biosynthesis. In terms of biological role, catalyzes the base-exchange of a guanine (G) residue with the queuine precursor 7-aminomethyl-7-deazaguanine (PreQ1) at position 34 (anticodon wobble position) in tRNAs with GU(N) anticodons (tRNA-Asp, -Asn, -His and -Tyr). Catalysis occurs through a double-displacement mechanism. The nucleophile active site attacks the C1' of nucleotide 34 to detach the guanine base from the RNA, forming a covalent enzyme-RNA intermediate. The proton acceptor active site deprotonates the incoming PreQ1, allowing a nucleophilic attack on the C1' of the ribose to form the product. After dissociation, two additional enzymatic reactions on the tRNA convert PreQ1 to queuine (Q), resulting in the hypermodified nucleoside queuosine (7-(((4,5-cis-dihydroxy-2-cyclopenten-1-yl)amino)methyl)-7-deazaguanosine). The protein is Queuine tRNA-ribosyltransferase of Rickettsia peacockii (strain Rustic).